An 810-amino-acid chain; its full sequence is Phenylalanine--tRNA ligase beta subunit (810 aa).

In terms of domain architecture, tRNA-binding spans 39 to 150 (RTWANGVVVG…ENLPLGSDVR (112 aa)). In terms of domain architecture, B5 spans 411-495 (TWSRSIFLRL…RLYGYDNFCD (85 aa)). Positions 473, 479, 482, and 483 each coordinate Mg(2+). The region spanning 716 to 809 (STYPASDRDI…LVEKFGVNLR (94 aa)) is the FDX-ACB domain.

It belongs to the phenylalanyl-tRNA synthetase beta subunit family. Type 1 subfamily. As to quaternary structure, tetramer of two alpha and two beta subunits. Mg(2+) serves as cofactor.

Its subcellular location is the cytoplasm. It catalyses the reaction tRNA(Phe) + L-phenylalanine + ATP = L-phenylalanyl-tRNA(Phe) + AMP + diphosphate + H(+). This chain is Phenylalanine--tRNA ligase beta subunit, found in Trichormus variabilis (strain ATCC 29413 / PCC 7937) (Anabaena variabilis).